We begin with the raw amino-acid sequence, 403 residues long: L-alanine/L-glutamate racemase (403 aa).

Residues Y62–N64, G92–L93, and A209–T211 each bind pyridoxal 5'-phosphate. K212 bears the N6-(pyridoxal phosphate)lysine mark.

It belongs to the trans-sulfuration enzymes family. Homotetramer; dimer of active dimers. Pyridoxal 5'-phosphate is required as a cofactor.

It catalyses the reaction L-alanine = D-alanine. It carries out the reaction L-glutamate = D-glutamate. The catalysed reaction is L,L-cystathionine + H2O = L-homocysteine + pyruvate + NH4(+). The protein operates within cell wall biogenesis; peptidoglycan biosynthesis. Functionally, catalyzes the racemization of L-alanine to D-alanine, and of L-glutamate to D-glutamate. The activity is low, but likely physiological since W.pipientis wMel lacks canonical alr and murI genes, while D-alanine and D-glutamate are essential components of peptidoglycan. Also displays a vestigial cystathionine beta-lyase (CBL) activity, cleaving cystathionine to homocysteine and pyruvate; however, this reaction seems not to be physiologically relevant since the only met gene in the genome of this obligately intracellular parasitic bacterium is metC, demonstrating that it is a methionine auxotroph. This Wolbachia pipientis wMel protein is L-alanine/L-glutamate racemase.